Consider the following 333-residue polypeptide: Late embryogenesis abundant protein 1 (333 aa).

Disordered regions lie at residues 1 to 20 (MASR…RRAA) and 116 to 246 (KDYT…GQGQ). A coiled-coil region spans residues 3–52 (SRQDRREARAEADARRAAEEIARARDERVMQAEVDARSAADEIARARADR). Basic and acidic residues-rich tracts occupy residues 116 to 163 (KDYT…KDAV), 172 to 219 (EATK…DATK), and 227 to 241 (DKAR…DATD).

This sequence belongs to the LEA type 4 family.

In Oryza sativa subsp. indica (Rice), this protein is Late embryogenesis abundant protein 1 (LEA1).